We begin with the raw amino-acid sequence, 514 residues long: Double-stranded RNA-binding protein 6 (514 aa).

2 DRBM domains span residues 1–70 (MYKN…ALAR) and 87–155 (VYKN…SLRQ). Disordered stretches follow at residues 195–268 (NNPH…SRFP) and 455–496 (EASQ…KDDH). 3 stretches are compositionally biased toward polar residues: residues 216–225 (FPQSSHSSYS), 249–263 (AASQ…SPNP), and 473–484 (SPDSLPKTQLKT).

In terms of biological role, binds double-stranded RNA. This Oryza sativa subsp. japonica (Rice) protein is Double-stranded RNA-binding protein 6 (DRB6).